A 407-amino-acid polypeptide reads, in one-letter code: tRNA pseudouridine synthase Pus10 (407 aa).

The Nucleophile role is filled by D232. Residues Y300 and Y369 each contribute to the substrate site.

This sequence belongs to the pseudouridine synthase Pus10 family.

It carries out the reaction uridine(54) in tRNA = pseudouridine(54) in tRNA. It catalyses the reaction uridine(55) in tRNA = pseudouridine(55) in tRNA. In terms of biological role, responsible for synthesis of pseudouridine from uracil-54 and uracil-55 in the psi GC loop of transfer RNAs. This Methanosphaera stadtmanae (strain ATCC 43021 / DSM 3091 / JCM 11832 / MCB-3) protein is tRNA pseudouridine synthase Pus10.